The sequence spans 586 residues: Probable lysosomal cobalamin transporter (586 aa).

The next 9 membrane-spanning stretches (helical) occupy residues 10-30, 47-67, 96-116, 147-167, 191-211, 315-335, 378-398, 420-440, and 509-529; these read IWIAYAVAVGLALFAAIVTTF, VVSLTSLLATVLLLPVDIALV, IVYYSLYSLDALLCLIVIPFA, SGFIILVLILFFVGFFVPAAG, ALTFAVGLLVCLGTLLYVLYT, LVGGILLLLVSVIVWVSMLIT, IIMAFLVLFFFSSSISGLATV, ILIATVMMALIILGINYSIAM, and VFGAVDFWAQVAFLAVFLIVL. N540 is a glycosylation site (N-linked (GlcNAc...) asparagine).

This sequence belongs to the LIMR family. LMBRD1 subfamily.

The protein localises to the lysosome membrane. Functionally, probable lysosomal cobalamin transporter. Required to export cobalamin from lysosomes allowing its conversion to cofactors. The sequence is that of Probable lysosomal cobalamin transporter from Pyricularia oryzae (strain 70-15 / ATCC MYA-4617 / FGSC 8958) (Rice blast fungus).